Consider the following 219-residue polypeptide: 2-hydroxy-3-keto-5-methylthiopentenyl-1-phosphate phosphatase (219 aa).

This sequence belongs to the HAD-like hydrolase superfamily. MtnX family.

It catalyses the reaction 2-hydroxy-5-methylsulfanyl-3-oxopent-1-enyl phosphate + H2O = 1,2-dihydroxy-5-(methylsulfanyl)pent-1-en-3-one + phosphate. The protein operates within amino-acid biosynthesis; L-methionine biosynthesis via salvage pathway; L-methionine from S-methyl-5-thio-alpha-D-ribose 1-phosphate: step 4/6. Dephosphorylates 2-hydroxy-3-keto-5-methylthiopentenyl-1-phosphate (HK-MTPenyl-1-P) yielding 1,2-dihydroxy-3-keto-5-methylthiopentene (DHK-MTPene). This chain is 2-hydroxy-3-keto-5-methylthiopentenyl-1-phosphate phosphatase, found in Bacillus thuringiensis subsp. konkukian (strain 97-27).